A 97-amino-acid chain; its full sequence is Co-chaperonin GroES (97 aa).

It belongs to the GroES chaperonin family. In terms of assembly, heptamer of 7 subunits arranged in a ring. Interacts with the chaperonin GroEL.

Its subcellular location is the cytoplasm. Its function is as follows. Together with the chaperonin GroEL, plays an essential role in assisting protein folding. The GroEL-GroES system forms a nano-cage that allows encapsulation of the non-native substrate proteins and provides a physical environment optimized to promote and accelerate protein folding. GroES binds to the apical surface of the GroEL ring, thereby capping the opening of the GroEL channel. In Stutzerimonas stutzeri (strain A1501) (Pseudomonas stutzeri), this protein is Co-chaperonin GroES.